Consider the following 78-residue polypeptide: Acyl carrier protein (78 aa).

The region spanning 2-77 is the Carrier domain; that stretch reads SDTAERVKKI…DAVKYIEKAT (76 aa). Serine 37 carries the post-translational modification O-(pantetheine 4'-phosphoryl)serine.

It belongs to the acyl carrier protein (ACP) family. In terms of processing, 4'-phosphopantetheine is transferred from CoA to a specific serine of apo-ACP by AcpS. This modification is essential for activity because fatty acids are bound in thioester linkage to the sulfhydryl of the prosthetic group.

It localises to the cytoplasm. It participates in lipid metabolism; fatty acid biosynthesis. In terms of biological role, carrier of the growing fatty acid chain in fatty acid biosynthesis. The polypeptide is Acyl carrier protein (Chelativorans sp. (strain BNC1)).